Here is a 398-residue protein sequence, read N- to C-terminus: O-methyltransferase mpaG (398 aa).

D264 provides a ligand contact to S-adenosyl-L-methionine. H306 acts as the Proton acceptor in catalysis. Catalysis depends on residues E335 and E362.

It belongs to the class I-like SAM-binding methyltransferase superfamily. Cation-independent O-methyltransferase family. COMT subfamily.

The protein localises to the cytoplasm. It is found in the cytosol. The enzyme catalyses (4E,8E)-10-(4,6-dihydroxy-7-methyl-3-oxo-1,3-dihydro-2-benzofuran-5-yl)-4,8-dimethyldeca-4,8-dienoate + S-adenosyl-L-methionine = (4E,8E)-10-(4-hydroxy-6-methoxy-7-methyl-3-oxo-1,3-dihydro-2-benzofuran-5-yl)-4,8-dimethyldeca-4,8-dienoate + S-adenosyl-L-homocysteine + H(+). It functions in the pathway secondary metabolite biosynthesis; terpenoid biosynthesis. Functionally, O-methyltransferase; part of the gene cluster that mediates the biosynthesis of mycophenolic acid (MPA), the first isolated antibiotic natural product in the world obtained from a culture of Penicillium brevicompactum in 1893. MpaC methylates farnesyl-DHMP-3C (FDHMP-3C) to yield MFDHMP-3C. The first step of the pathway is the synthesis of 5-methylorsellinic acid (5MOA) by the cytosolic polyketide synthase mpaC. 5MOA is then converted to the phthalide compound 5,7-dihydroxy-4,6-dimethylphthalide (DHMP) by the endoplasmic reticulum-bound cytochrome P450 monooxygenase mpaDE. MpaDE first catalyzes hydroxylation of 5-MOA to 4,6-dihydroxy-2-(hydroxymethyl)-3-methylbenzoic acid (DHMB). MpaDE then acts as a lactone synthase that catalyzes the ring closure to convert DHMB into DHMP. The next step is the prenylation of DHMP by the Golgi apparatus-associated prenyltransferase mpaA to yield farnesyl-DHMP (FDHMP). The ER-bound oxygenase mpaB then mediates the oxidative cleavage the C19-C20 double bond in FDHMP to yield FDHMP-3C via a mycophenolic aldehyde intermediate. The O-methyltransferase mpaG catalyzes the methylation of FDHMP-3C to yield MFDHMP-3C. After the cytosolic methylation of FDHMP-3C, MFDHMP-3C enters into peroxisomes probably via free diffusion due to its low molecular weight. Upon a peroxisomal CoA ligation reaction, catalyzed by a beta-oxidation component enzyme acyl-CoA ligase ACL891, MFDHMP-3C-CoA would then be restricted to peroxisomes for the following beta-oxidation pathway steps. The peroxisomal beta-oxidation machinery than converts MFDHMP-3C-CoA into MPA_CoA, via a beta-oxidation chain-shortening process. Finally mpaH acts as a peroxisomal acyl-CoA hydrolase with high substrate specificity toward MPA-CoA to release the final product MPA. The chain is O-methyltransferase mpaG from Penicillium roqueforti (strain FM164).